The following is a 203-amino-acid chain: Histidine biosynthesis bifunctional protein HisIE (203 aa).

Residues 1-108 (MELDFDKMNG…GEKNEEPVMF (108 aa)) are phosphoribosyl-AMP cyclohydrolase. The tract at residues 109-203 (LKALQDFIDK…ERHSSTWKKH (95 aa)) is phosphoribosyl-ATP pyrophosphohydrolase.

The protein in the N-terminal section; belongs to the PRA-CH family. It in the C-terminal section; belongs to the PRA-PH family.

The protein localises to the cytoplasm. It catalyses the reaction 1-(5-phospho-beta-D-ribosyl)-ATP + H2O = 1-(5-phospho-beta-D-ribosyl)-5'-AMP + diphosphate + H(+). The enzyme catalyses 1-(5-phospho-beta-D-ribosyl)-5'-AMP + H2O = 1-(5-phospho-beta-D-ribosyl)-5-[(5-phospho-beta-D-ribosylamino)methylideneamino]imidazole-4-carboxamide. Its pathway is amino-acid biosynthesis; L-histidine biosynthesis; L-histidine from 5-phospho-alpha-D-ribose 1-diphosphate: step 2/9. It functions in the pathway amino-acid biosynthesis; L-histidine biosynthesis; L-histidine from 5-phospho-alpha-D-ribose 1-diphosphate: step 3/9. The chain is Histidine biosynthesis bifunctional protein HisIE from Bacteroides thetaiotaomicron (strain ATCC 29148 / DSM 2079 / JCM 5827 / CCUG 10774 / NCTC 10582 / VPI-5482 / E50).